The chain runs to 942 residues: Lon protease homolog 4, chloroplastic/mitochondrial (942 aa).

Position 54 is a phosphoserine (Ser-54). The region spanning 79 to 301 is the Lon N-terminal domain; it reads VIALPLPHKP…LTLELVKKEV (223 aa). Residue 456–463 participates in ATP binding; sequence GPTGVGKT. The interval 673–725 is disordered; sequence ISDDVTTDTEETKSLAKTDLESPETSAEGSTVLTDELATGDPTESTTEQSGEV. The segment covering 682–692 has biased composition (basic and acidic residues); sequence EETKSLAKTDL. Positions 695–705 are enriched in polar residues; it reads PETSAEGSTVL. The Lon proteolytic domain maps to 756 to 940; it reads QTPVGVVMGL…EQIFELAFGY (185 aa). Catalysis depends on residues Ser-846 and Lys-889.

It belongs to the peptidase S16 family. As to quaternary structure, homohexamer or homoheptamer. Organized in a ring with a central cavity.

The protein resides in the mitochondrion matrix. The protein localises to the plastid. It is found in the chloroplast thylakoid membrane. It carries out the reaction Hydrolysis of proteins in presence of ATP.. ATP-dependent serine protease that mediates the selective degradation of misfolded, unassembled or oxidatively damaged polypeptides as well as certain short-lived regulatory proteins in the mitochondrial matrix. May also have a chaperone function in the assembly of inner membrane protein complexes. Participates in the regulation of mitochondrial gene expression and in the maintenance of the integrity of the mitochondrial genome. Binds to mitochondrial DNA in a site-specific manner. The polypeptide is Lon protease homolog 4, chloroplastic/mitochondrial (LON4) (Arabidopsis thaliana (Mouse-ear cress)).